The sequence spans 434 residues: Exopolygalacturonase X-1 (434 aa).

The N-terminal stretch at 1–22 is a signal peptide; the sequence is MKLSHLLTSAVSVLSLGLTVEG. N-linked (GlcNAc...) asparagine glycosylation is found at N113, N129, and N199. One copy of the PbH1 1 repeat lies at 231–252; that stretch reads SKNIVIQNSVINNGDDCVSFKP. D245 serves as the catalytic Proton donor. Residues C247 and C264 are joined by a disulfide bond. N-linked (GlcNAc...) asparagine glycans are attached at residues N253 and N265. The stretch at 254 to 274 is one PbH1 2 repeat; that stretch reads STEILVQNLYCNGSHGISVGS. H268 is an active-site residue. 5 N-linked (GlcNAc...) asparagine glycosylation sites follow: N292, N297, N329, N354, and N364. The PbH1 3 repeat unit spans residues 327–348; the sequence is VSNITYEDMYIENVDWAIEITQ. A PbH1 4 repeat occupies 362 to 405; the sequence is PSNLTISDVYISNMYGTTSSARDPNIGTIVCSSPDVCSNIYVEN. The cysteines at positions 392 and 398 are disulfide-linked. 2 N-linked (GlcNAc...) asparagine glycosylation sites follow: N423 and N430.

This sequence belongs to the glycosyl hydrolase 28 family.

Its subcellular location is the secreted. The catalysed reaction is [(1-&gt;4)-alpha-D-galacturonosyl](n) + H2O = alpha-D-galacturonate + [(1-&gt;4)-alpha-D-galacturonosyl](n-1). Specific in hydrolyzing the terminal glycosidic bond of polygalacturonic acid and oligogalacturonates. The protein is Exopolygalacturonase X-1 (pgaX-1) of Emericella nidulans (strain FGSC A4 / ATCC 38163 / CBS 112.46 / NRRL 194 / M139) (Aspergillus nidulans).